Here is a 71-residue protein sequence, read N- to C-terminus: uncharacterized protein (71 aa).

The chain crosses the membrane as a helical span at residues 44 to 66 (LFFLVFRRLFSWFLVLLPSPRFF).

It is found in the membrane. This is an uncharacterized protein from Saccharomyces cerevisiae (strain ATCC 204508 / S288c) (Baker's yeast).